Here is a 170-residue protein sequence, read N- to C-terminus: Shikimate kinase (170 aa).

Glycine 15–threonine 20 contributes to the ATP binding site. Threonine 19 contacts Mg(2+). Residues aspartate 37, arginine 61, and glycine 82 each coordinate substrate. Arginine 120 provides a ligand contact to ATP. Arginine 138 contacts substrate. Glutamine 154 is a binding site for ATP.

This sequence belongs to the shikimate kinase family. In terms of assembly, monomer. It depends on Mg(2+) as a cofactor.

The protein resides in the cytoplasm. It carries out the reaction shikimate + ATP = 3-phosphoshikimate + ADP + H(+). The protein operates within metabolic intermediate biosynthesis; chorismate biosynthesis; chorismate from D-erythrose 4-phosphate and phosphoenolpyruvate: step 5/7. Functionally, catalyzes the specific phosphorylation of the 3-hydroxyl group of shikimic acid using ATP as a cosubstrate. In Staphylococcus epidermidis (strain ATCC 35984 / DSM 28319 / BCRC 17069 / CCUG 31568 / BM 3577 / RP62A), this protein is Shikimate kinase.